The sequence spans 424 residues: Putative histone deacetylase complex subunit cti6 (424 aa).

Disordered stretches follow at residues 1–49, 117–155, 170–341, and 381–405; these read MPSN…GEVT, SKYL…TMNS, KEKS…PDGT, and AQSA…ETLR. Residues 48-103 form a PHD-type zinc finger; it reads VTRCVCGIVESDDEASDGGLYIQCDQCSVWQHGNCVGFADESEVPEVYYCEICHPE. Low complexity predominate over residues 127–137; it reads EASQTEESSST. Ser187 bears the Phosphoserine mark. A compositionally biased stretch (acidic residues) spans 241–256; that stretch reads DAPEEETVDTVEEIAD. Basic and acidic residues predominate over residues 257-266; that stretch reads EEKHSVKEES. Residues 272-287 show a composition bias toward low complexity; sequence QSSQQSTITSISTTTR. A compositionally biased stretch (basic and acidic residues) spans 294–303; the sequence is REAAAEDKAD. The segment covering 313–324 has biased composition (basic residues); the sequence is SKTRKVGGRRGK. Over residues 392–405 the composition is skewed to basic and acidic residues; sequence SSKEGPEEEKETLR.

It is found in the cytoplasm. The protein localises to the nucleus. Could be a component of the RPD3C(L) histone deacetylase complex (HDAC). The protein is Putative histone deacetylase complex subunit cti6 (cti6) of Schizosaccharomyces pombe (strain 972 / ATCC 24843) (Fission yeast).